The chain runs to 340 residues: MAASHPYFNLPDFTQPSPPSTPSSLTSNHHNRCGPSNATKGLFVALLGGGLSAGFVGPFSRMAYQTSQLPSLELLIFRCLFHLPIALILKFRGDPLLGPPDVRVRAFLHAILNVLSIGCAYSAVQVVPAGNAVTVRKGSSTVCSALLALCLESQRLSGYAWCGLFGSTLGLIIIVGPGLGTLQEGTTGLYTALGYVLAFLGGLALSLGLQVYRSLHFPSCLPTVAFLFGLVGLIVSVPGLFVLQTPVLPQDTLSWSCMVAVGLLALVSFVCVSYAVTKAHPALVCAVLHSEVVVALMLQYYVLYETVAPSDIMGAGVVLGSIAIITAQNFSCDKEGQVEE.

A disordered region spans residues 11–31; the sequence is PDFTQPSPPSTPSSLTSNHHN. 9 helical membrane passes run 39–59, 69–89, 107–127, 160–180, 189–209, 223–243, 257–277, 283–303, and 307–327; these read TKGLFVALLGGGLSAGFVGPF, LPSLELLIFRCLFHLPIALIL, FLHAILNVLSIGCAYSAVQVV, AWCGLFGSTLGLIIIVGPGLG, LYTALGYVLAFLGGLALSLGL, TVAFLFGLVGLIVSVPGLFVL, CMVAVGLLALVSFVCVSYAVT, LVCAVLHSEVVVALMLQYYVL, and VAPSDIMGAGVVLGSIAIITA. An EamA 1 domain is found at 51–176; it reads LSAGFVGPFS…STLGLIIIVG (126 aa). An EamA 2 domain is found at 223 to 327; the sequence is TVAFLFGLVG…VLGSIAIITA (105 aa).

It belongs to the SLC35G solute transporter family.

It localises to the membrane. In Rattus norvegicus (Rat), this protein is Solute carrier family 35 member G3 (Slc35g3).